We begin with the raw amino-acid sequence, 292 residues long: NAD-dependent protein deacetylase sir-2.4 (292 aa).

Residues 31–292 enclose the Deacetylase sirtuin-type domain; that stretch reads IEKLRTLYNH…DEVPIPLKIS (262 aa). NAD(+) contacts are provided by residues 56–75 and 116–119; these read GAGVSTGSKLPDFRGKQGVW and QNVD. Residue His-136 is the Proton acceptor of the active site. Residues Cys-144, Cys-147, Cys-163, and Cys-169 each coordinate Zn(2+). NAD(+) contacts are provided by residues 216–218, 242–244, and Val-260; these read GTS and NYQ.

The protein belongs to the sirtuin family. Class IV subfamily. The cofactor is Zn(2+).

The enzyme catalyses N(6)-acetyl-L-lysyl-[protein] + NAD(+) + H2O = 2''-O-acetyl-ADP-D-ribose + nicotinamide + L-lysyl-[protein]. In terms of biological role, NAD-dependent protein deacetylase. In Caenorhabditis elegans, this protein is NAD-dependent protein deacetylase sir-2.4 (sir-2.4).